Reading from the N-terminus, the 61-residue chain is MFTVFLLVVLATTVVSFPSDRASDGRDDEAKDERSDMHESGRKGRGRCCHPACGPNYSCGR.

A signal peptide spans 1 to 16; sequence MFTVFLLVVLATTVVS. The propeptide occupies 17–43; it reads FPSDRASDGRDDEAKDERSDMHESGRK. The interval 19 to 46 is disordered; it reads SDRASDGRDDEAKDERSDMHESGRKGRG. A compositionally biased stretch (basic and acidic residues) spans 21–42; that stretch reads RASDGRDDEAKDERSDMHESGR. Disulfide bonds link Cys48-Cys53 and Cys49-Cys59. A 4-hydroxyproline; partial modification is found at Pro55. Cys59 bears the Cysteine amide mark.

Belongs to the conotoxin A superfamily. In terms of tissue distribution, expressed by the venom duct.

The protein resides in the secreted. Its function is as follows. Alpha-conotoxins act on postsynaptic membranes, they bind to the nicotinic acetylcholine receptors (nAChR) and thus inhibit them. This Conus stercusmuscarum (Fly-specked cone) protein is Alpha-conotoxin-like Sm1.1.